A 59-amino-acid chain; its full sequence is Large ribosomal subunit protein uL30 (59 aa).

Belongs to the universal ribosomal protein uL30 family. In terms of assembly, part of the 50S ribosomal subunit.

This Geotalea daltonii (strain DSM 22248 / JCM 15807 / FRC-32) (Geobacter daltonii) protein is Large ribosomal subunit protein uL30.